The chain runs to 268 residues: Hydroxyethylthiazole kinase (268 aa).

M45 serves as a coordination point for substrate. Positions 121 and 167 each coordinate ATP. G194 is a binding site for substrate.

It belongs to the Thz kinase family. The cofactor is Mg(2+).

It carries out the reaction 5-(2-hydroxyethyl)-4-methylthiazole + ATP = 4-methyl-5-(2-phosphooxyethyl)-thiazole + ADP + H(+). Its pathway is cofactor biosynthesis; thiamine diphosphate biosynthesis; 4-methyl-5-(2-phosphoethyl)-thiazole from 5-(2-hydroxyethyl)-4-methylthiazole: step 1/1. Functionally, catalyzes the phosphorylation of the hydroxyl group of 4-methyl-5-beta-hydroxyethylthiazole (THZ). The polypeptide is Hydroxyethylthiazole kinase (Bacillus thuringiensis (strain Al Hakam)).